The primary structure comprises 375 residues: Sulfite efflux pump SSU1 (375 aa).

Residues 1–25 (MPSGSGFHNIEEAGEKARKRDDWIA) are Cytoplasmic-facing. Residues 26 to 46 (ISNFHPGWFSVNMGTGITAIL) form a helical membrane-spanning segment. Over 47 to 59 (LQNLPYQFPGLHY) the chain is Extracellular. The chain crosses the membrane as a helical span at residues 60-80 (IAVVLFILNVIIFFLFLTISI). Topologically, residues 81–101 (TRYCLWPDKFKAMLAHPAHSM) are cytoplasmic. The chain crosses the membrane as a helical span at residues 102–122 (LLGTFPMGFATIINCIVFICV). Topologically, residues 123–135 (PVWGEWASRFAWG) are extracellular. Residues 136-156 (LWWIDAAVSVAICYFVPFMLM) traverse the membrane as a helical segment. At 157-167 (TKHTSSLETMT) the chain is on the cytoplasmic side. A helical transmembrane segment spans residues 168–188 (AAWLLPIVAPVVAAASGGVVA). Residues 189 to 200 (DSLQNDTHALIT) are Extracellular-facing. The N-linked (GlcNAc...) asparagine glycan is linked to asparagine 193. A helical transmembrane segment spans residues 201 to 221 (ILVCYAMWGSAVPLAMVILVI). The Cytoplasmic segment spans residues 222-234 (YFQRLAIHKLVPR). The chain crosses the membrane as a helical span at residues 235 to 255 (AAIVSALLPIGPLGQGGFGLM). The Extracellular segment spans residues 256-277 (QLGVVAKRVFPRLDFLAPIAGD). A helical transmembrane segment spans residues 278–298 (IFYVMGAFIAMIMWGFGLIWL). Residues 299–309 (WFALASFTRGK) are Cytoplasmic-facing. The chain crosses the membrane as a helical span at residues 310 to 330 (FYFNIGWWAFTFPLGVFTTAT). At 331-343 (TQMGKEFNSPFFD) the chain is on the extracellular side. A helical membrane pass occupies residues 344 to 364 (ILGTFFSIVVTCMWVLVFALT). At 365 to 375 (VYKSCTKELFR) the chain is on the cytoplasmic side.

Belongs to the tellurite-resistance/dicarboxylate transporter (TDT) family.

It is found in the cell membrane. Its function is as follows. Sulphite efflux pump required for the secretion of sulphite as a reducing agent. In the presence of sulphite, cystine in keratin is directly cleaved to cysteine and S-sulphocysteine, and thereby, reduced proteins become accessible to hydrolysis by a variety of secreted endo- and exoproteases. Excretion of sulphite mediated by an efflux pump also represents a detoxification pathway for dermatophytes during infection of the epidermal stratum corneum, hair and nails, which are rich in cysteine. The chain is Sulfite efflux pump SSU1 (SSU1) from Trichophyton rubrum (Athlete's foot fungus).